The primary structure comprises 757 residues: Kin of IRRE-like protein 1 (757 aa).

The signal sequence occupies residues 1–16 (MLSLLVWILTLSDTFS). The Extracellular portion of the chain corresponds to 17 to 499 (QGTQTRFSQE…REVLPVGIIA (483 aa)). Ig-like C2-type domains lie at 21-115 (TRFS…AKLT), 120-216 (PEDT…TSIE), 223-299 (PTVT…TNVS), 308-387 (PRIV…EVPL), and 392-488 (PPII…IQLE). Cysteine 42 and cysteine 100 are joined by a disulfide. N-linked (GlcNAc...) asparagine glycosylation is found at asparagine 46 and asparagine 140. 2 disulfides stabilise this stretch: cysteine 143/cysteine 200 and cysteine 244/cysteine 287. Asparagine 297 carries an N-linked (GlcNAc...) asparagine glycan. The cysteines at positions 329 and 371 are disulfide-linked. Positions 405-407 (RGD) match the Cell attachment site motif. Cysteine 413 and cysteine 472 form a disulfide bridge. N-linked (GlcNAc...) asparagine glycosylation is present at asparagine 471. A helical membrane pass occupies residues 500 to 520 (GATIGASILLIFFFIALVFFL). At 521–757 (YRRRKGSRKD…RFQQRMQTHV (237 aa)) the chain is on the cytoplasmic side. Serine 574 is subject to Phosphoserine. A phosphotyrosine; by FYN mark is found at tyrosine 605 and tyrosine 606. Residues tyrosine 622 and tyrosine 625 each carry the phosphotyrosine modification. The segment at 649-679 (QLNTYSRGPASDYGPEPTPPGPAAPAGTDTT) is disordered. Tyrosine 724 is subject to Phosphotyrosine.

Belongs to the immunoglobulin superfamily. Interacts with TJP1/ZO-1 and with NPHS2/podocin (via the C-terminus). Interacts with NPHS1/nephrin (via the Ig-like domains); this interaction is dependent on KIRREL1 glycosylation. Homodimer (via the Ig-like domains). Interacts when tyrosine-phosphorylated with GRB2. Phosphorylation probably regulates the interaction with NSH2. Phosphorylated at Tyr-605 and Tyr-606 by FYN, leading to GRB2 binding. In terms of processing, N-glycosylated. As to expression, abundantly expressed in kidney. Specifically expressed in podocytes of kidney glomeruli.

Its subcellular location is the cell membrane. Functionally, required for proper function of the glomerular filtration barrier. It is involved in the maintenance of a stable podocyte architecture with interdigitating foot processes connected by specialized cell-cell junctions, known as the slit diaphragm. It is a signaling protein that needs the presence of TEC kinases to fully trans-activate the transcription factor AP-1. This is Kin of IRRE-like protein 1 from Homo sapiens (Human).